Reading from the N-terminus, the 454-residue chain is Transmembrane protein adipocyte-associated 1 homolog (454 aa).

Residues asparagine 26 and asparagine 44 are each glycosylated (N-linked (GlcNAc...) asparagine). A run of 5 helical transmembrane segments spans residues 80–100 (AILIPNLLFLLFLFLKCTSVI), 113–133 (AFTLLVYVSTLVNIIRCVYSM), 151–171 (IIIKFFYLTAEFCALTFGLLF), 180–200 (ILIALLGTLLVSIPHTAVQVI), and 224–244 (FVFWVLSSATLALVYFFIMCL). N-linked (GlcNAc...) asparagine glycosylation occurs at asparagine 258. 2 helical membrane passes run 262-282 (FIYCMMMVTLNILQSMGAALI) and 290-310 (LCFVGVSTYVYFVLYPPIIYF). Asparagine 322 and asparagine 323 each carry an N-linked (GlcNAc...) asparagine glycan. The interval 408-454 (RTGSDDFAHHRDSMLSEPSTGTTTRHLKGLGPQGSLVFEEDPSSLRL) is disordered. Residues 410–421 (GSDDFAHHRDSM) show a composition bias toward basic and acidic residues. A compositionally biased stretch (acidic residues) spans 445–454 (FEEDPSSLRL).

This sequence belongs to the UPF0359 family.

It is found in the membrane. The polypeptide is Transmembrane protein adipocyte-associated 1 homolog (tpra-1) (Caenorhabditis briggsae).